A 308-amino-acid polypeptide reads, in one-letter code: Serine/threonine-protein phosphatase 4 catalytic subunit (308 aa).

The Mn(2+) site is built by Asp-51, His-53, Asp-79, and Asn-111. Catalysis depends on His-112, which acts as the Proton donor. 2 residues coordinate Mn(2+): His-161 and His-235. Leu-308 is modified (leucine methyl ester).

Belongs to the PPP phosphatase family. PP-4 (PP-X) subfamily. In terms of assembly, catalytic subunit of the histone H2A phosphatase complex (HTP-C) containing PPH3, PSY2 and PSY4. It depends on Mn(2+) as a cofactor.

It is found in the cytoplasm. The protein resides in the nucleus. It carries out the reaction O-phospho-L-seryl-[protein] + H2O = L-seryl-[protein] + phosphate. It catalyses the reaction O-phospho-L-threonyl-[protein] + H2O = L-threonyl-[protein] + phosphate. Functionally, forms the histone H2A phosphatase complex in association with the regulatory subunits PSY2 and PSY4, which dephosphorylates H2AS128ph (gamma-H2A) that has been displaced from sites of DNA lesions in the double-stranded DNA break repair process. Dephosphorylation is necessary for efficient recovery from the DNA damage checkpoint. The sequence is that of Serine/threonine-protein phosphatase 4 catalytic subunit (PPH3) from Kluyveromyces lactis (strain ATCC 8585 / CBS 2359 / DSM 70799 / NBRC 1267 / NRRL Y-1140 / WM37) (Yeast).